Reading from the N-terminus, the 414-residue chain is GPI mannosyltransferase 1 (414 aa).

Helical transmembrane passes span 6–26 (ISHI…FGLY), 87–107 (YIFM…LSGI), 119–139 (IIML…STRG), 149–171 (IMLS…WLGL), 183–203 (LPSI…VPIV), 213–233 (FLIT…SIYG), 282–302 (MEKF…PLLF), 316–336 (FAFV…FLIF), 356–376 (IVAL…AYQL), and 387–407 (GLLF…SVFI).

It belongs to the PIGM family.

Its subcellular location is the endoplasmic reticulum membrane. It functions in the pathway glycolipid biosynthesis; glycosylphosphatidylinositol-anchor biosynthesis. In terms of biological role, mannosyltransferase involved in glycosylphosphatidylinositol-anchor biosynthesis. Transfers the first alpha-1,4-mannose to GlcN-acyl-PI during GPI precursor assembly. Required for cell wall integrity. The chain is GPI mannosyltransferase 1 (GPI14) from Debaryomyces hansenii (strain ATCC 36239 / CBS 767 / BCRC 21394 / JCM 1990 / NBRC 0083 / IGC 2968) (Yeast).